The following is a 241-amino-acid chain: Nickel import ATP-binding protein LarO (241 aa).

The ABC transporter domain maps to 2-240 (IKLVNICYDY…QPARQAQLMT (239 aa)). Residue 34-41 (GPNGSGKS) coordinates ATP.

This sequence belongs to the ABC transporter superfamily. As to quaternary structure, may form an energy-coupling factor (ECF) transporter complex composed of an ATP-binding protein (A component, LarO), a transmembrane protein (T component, LarQ) and a fused possible substrate-capture protein (S component, LarMN) of unknown stoichiometry.

It is found in the cell membrane. In terms of biological role, probable ATP-binding component of the energy-coupling factor (ECF) transporter complex LarMNQO involved in nickel import. LarO is presumably responsible for energy coupling to the transport system. The sequence is that of Nickel import ATP-binding protein LarO from Lactiplantibacillus plantarum (strain ATCC BAA-793 / NCIMB 8826 / WCFS1) (Lactobacillus plantarum).